Here is a 421-residue protein sequence, read N- to C-terminus: D-amino-acid oxidase (421 aa).

Positions 12, 13, 14, 15, 47, 64, 65, 225, 226, 359, 385, 388, and 389 each coordinate FAD. A D-proline-binding site is contributed by Arg-359. Arg-359 serves as a coordination point for D-serine.

It belongs to the DAMOX/DASOX family. The cofactor is FAD.

Its subcellular location is the cytoplasm. It localises to the secreted. The protein localises to the cell wall. It carries out the reaction a D-alpha-amino acid + O2 + H2O = a 2-oxocarboxylate + H2O2 + NH4(+). Its function is as follows. Catalyzes the oxidative deamination of D-amino acids with broad substrate specificity. The chain is D-amino-acid oxidase from Bradyrhizobium diazoefficiens (strain JCM 10833 / BCRC 13528 / IAM 13628 / NBRC 14792 / USDA 110).